The following is a 127-amino-acid chain: Ribonuclease P protein component 1 (127 aa).

Belongs to the eukaryotic/archaeal RNase P protein component 1 family. As to quaternary structure, consists of a catalytic RNA component and at least 4 protein subunits. Forms a subcomplex with Rnp4 which stimulates the catalytic RNA.

The protein localises to the cytoplasm. The enzyme catalyses Endonucleolytic cleavage of RNA, removing 5'-extranucleotides from tRNA precursor.. Its function is as follows. Part of ribonuclease P, a protein complex that generates mature tRNA molecules by cleaving their 5'-ends. The RNA is catalytic, but its KM for pre-tRNA is 170-fold decreased in the presence of the 4 known protein subunits (Rnp1-4). The protein subunits also decrease the amount of Mg(2+) needed for activity. The chain is Ribonuclease P protein component 1 from Pyrococcus furiosus (strain ATCC 43587 / DSM 3638 / JCM 8422 / Vc1).